The following is a 264-amino-acid chain: Molybdenum transport system permease protein ModB (264 aa).

The next 6 membrane-spanning stretches (helical) occupy residues 11–31, 57–77, 90–110, 127–147, 176–196, and 234–254; these read VYLP…AIAI, TAAA…LVLA, LILL…LYAF, IAFS…PYLV, WWRV…VLAF, and AAVA…LGVG. The ABC transmembrane type-1 domain maps to 51–253; it reads LLLSVKTAAA…VVAALVVLGV (203 aa).

The protein belongs to the binding-protein-dependent transport system permease family. CysTW subfamily.

The protein resides in the cell membrane. Functionally, part of the binding-protein-dependent transport system ModABCD for molybdenum; probably responsible for the translocation of the substrate across the membrane. This Mycobacterium bovis (strain ATCC BAA-935 / AF2122/97) protein is Molybdenum transport system permease protein ModB (modB).